A 670-amino-acid chain; its full sequence is Solute carrier organic anion transporter family member 1A4 (670 aa).

Over 1–20 (MGKSEKEVATHGVRCFSKIK) the chain is Cytoplasmic. A helical transmembrane segment spans residues 21 to 40 (AFLLALTCAYVSKSLSGTYM). At 41–59 (NSMLTQIERQFGIPTSVVG) the chain is on the extracellular side. The helical transmembrane segment at 60–80 (LINGSFEIGNLLLIIFVSYFG) threads the bilayer. Topologically, residues 81-86 (TKLHRP) are cytoplasmic. A helical transmembrane segment spans residues 87 to 111 (IMIGVGCAVMGLGCFLISIPHFLMG). The Extracellular segment spans residues 112–155 (RYEYETTILPTSNLSSNSFVCTENRTQTLKPTQDPTECVKEMKS). Asn-124 and Asn-135 each carry an N-linked (GlcNAc...) asparagine glycan. A helical transmembrane segment spans residues 156 to 184 (LMWIYVLVGNIIRGMGETPIMPLGISYIE). The Cytoplasmic segment spans residues 185 to 203 (DFAKSENSPLYIGILETGM). The chain crosses the membrane as a helical span at residues 204–224 (TIGPLIGLLLGSSCANIYVDT). The Extracellular segment spans residues 225–242 (GSVNTDDLTITPTDTRWV). Residues 243–267 (GAWWIGFLVCAGVNILTSIPFFFFP) form a helical membrane-spanning segment. Residues 268 to 311 (KTLLKEGLQDNGDGTENAKEEKHREKIKEENRGITKDFFLFMKS) lie on the Cytoplasmic side of the membrane. A helical membrane pass occupies residues 312-333 (LSCNPIYMIFILISVIQVNAFI). At 334-353 (NSFTFMPKYLEQQYGKSTAE) the chain is on the extracellular side. The chain crosses the membrane as a helical span at residues 354–377 (IVFLMGLYMLPPICLGYLIGGLIM). The Cytoplasmic segment spans residues 378–381 (KKFK). Residues 382–405 (ITVKKAAYIGFWLSLTEYLLSFVS) traverse the membrane as a helical segment. Over 406–513 (YIMTCDNFPV…PECANKLQYF (108 aa)) the chain is Extracellular. The Kazal-like domain maps to 433–488 (NNVLADCNTKCSCLTNTWDPVCGDNGLSYMSACLAGCEKSVGTGTNMVFQNCSCIQ). Disulfide bonds link Cys-439-Cys-469, Cys-445-Cys-465, and Cys-454-Cys-486. N-linked (GlcNAc...) asparagine glycosylation is found at Asn-483 and Asn-492. A helical transmembrane segment spans residues 514–536 (LIISIIGCFIFSLGAIPGYMVLL). At 537–545 (RCMKSEEKS) the chain is on the cytoplasmic side. The helical transmembrane segment at 546-571 (LGVGLHTFCMRILGGIPAPIYFGALI) threads the bilayer. Residues 572–605 (DRTCLHWGTLKCGEPGACRMYDINSFRRIYLGLP) are Extracellular-facing. A helical transmembrane segment spans residues 606–623 (AALRGASFLPALFILILM). The Cytoplasmic segment spans residues 624 to 670 (RKFQFPGDIDSSDTDPAEMKLTAKESKCTNVHRSPTMQNDGERKTKL). Phosphoserine occurs at positions 634 and 635. A disordered region spans residues 649–670 (SKCTNVHRSPTMQNDGERKTKL). The segment covering 651 to 662 (CTNVHRSPTMQN) has biased composition (polar residues).

It belongs to the organo anion transporter (TC 2.A.60) family. In terms of tissue distribution, highly expressed in brain and liver. Detected at very low levels in heart and lung.

The protein localises to the cell membrane. It carries out the reaction estrone 3-sulfate(out) = estrone 3-sulfate(in). The catalysed reaction is taurocholate(out) = taurocholate(in). The enzyme catalyses prostaglandin E2(out) = prostaglandin E2(in). It catalyses the reaction L-thyroxine(out) = L-thyroxine(in). In terms of biological role, mediates the Na(+)-independent transport of organic anions such as taurocholate, cholate, 17-beta-glucuronosyl estradiol, prostaglandin E2, estrone 3-sulfate, L-thyroxine (T4), the cardiac glycosides ouabain and digoxin and thyroid hormones. Shows a pH-sensitive substrate specificity which may be ascribed to the protonation state of the binding site and leads to a stimulation of substrate transport in an acidic microenvironment. Hydrogencarbonate/HCO3(-) acts as the probable counteranion that exchanges for organic anions. In Mus musculus (Mouse), this protein is Solute carrier organic anion transporter family member 1A4 (Slco1a4).